A 95-amino-acid chain; its full sequence is uncharacterized protein (95 aa).

Residues 27–47 (SFGLAIIGILLIACEIILFLT) traverse the membrane as a helical segment.

The protein resides in the membrane. This is an uncharacterized protein from Homo sapiens (Human).